The primary structure comprises 348 residues: Phosphoribosylformylglycinamidine cyclo-ligase (348 aa).

The protein belongs to the AIR synthase family.

It localises to the cytoplasm. It carries out the reaction 2-formamido-N(1)-(5-O-phospho-beta-D-ribosyl)acetamidine + ATP = 5-amino-1-(5-phospho-beta-D-ribosyl)imidazole + ADP + phosphate + H(+). It functions in the pathway purine metabolism; IMP biosynthesis via de novo pathway; 5-amino-1-(5-phospho-D-ribosyl)imidazole from N(2)-formyl-N(1)-(5-phospho-D-ribosyl)glycinamide: step 2/2. The sequence is that of Phosphoribosylformylglycinamidine cyclo-ligase from Geobacter sp. (strain M21).